The sequence spans 621 residues: Chaperone protein HtpG (621 aa).

The interval 1-341 (MSNQEYTFQT…SEDLPLNVSR (341 aa)) is a; substrate-binding. Positions 342–547 (EILQQNKILA…GDEPNAMMAN (206 aa)) are b. The c stretch occupies residues 548–621 (WMRQMGQSVP…RLNSVLLKAL (74 aa)).

Belongs to the heat shock protein 90 family. As to quaternary structure, homodimer.

It localises to the cytoplasm. Molecular chaperone. Has ATPase activity. The protein is Chaperone protein HtpG of Helicobacter pylori (strain J99 / ATCC 700824) (Campylobacter pylori J99).